Reading from the N-terminus, the 514-residue chain is Probable lipid II flippase MurJ (514 aa).

14 helical membrane-spanning segments follow: residues 3 to 23 (ILKS…FGFF), 25 to 45 (DVLI…FIAF), 92 to 112 (ILVL…IIFI), 130 to 150 (LLKI…CSSI), 157 to 177 (FFIP…FSFF), 186 to 206 (IISL…YQFP), 245 to 265 (ISLI…ISWI), 271 to 291 (LIEF…FTSF), 315 to 335 (LILS…LVII), 354 to 374 (LELY…VSAF), 386 to 406 (ISIL…FYFQ), 409 to 429 (GLAL…YWKL), 448 to 468 (LLIA…FIPS), and 481 to 501 (LFTI…FLGI).

Belongs to the MurJ/MviN family.

The protein resides in the cell inner membrane. The protein operates within cell wall biogenesis; peptidoglycan biosynthesis. Its function is as follows. Involved in peptidoglycan biosynthesis. Transports lipid-linked peptidoglycan precursors from the inner to the outer leaflet of the cytoplasmic membrane. This chain is Probable lipid II flippase MurJ, found in Buchnera aphidicola subsp. Schizaphis graminum (strain Sg).